A 452-amino-acid chain; its full sequence is tRNA-2-methylthio-N(6)-dimethylallyladenosine synthase (452 aa).

The MTTase N-terminal domain maps to 16–134; it reads KRFFISTWGC…LPEYIERVKT (119 aa). The [4Fe-4S] cluster site is built by C25, C61, C95, C171, C175, and C178. The 231-residue stretch at 157–387 folds into the Radical SAM core domain; sequence RKSDIKAFVT…VEAVNEIMAR (231 aa). Residues 390 to 452 form the TRAM domain; the sequence is KEFEGKTVEV…NSFSLTGEII (63 aa).

The protein belongs to the methylthiotransferase family. MiaB subfamily. In terms of assembly, monomer. [4Fe-4S] cluster serves as cofactor.

It is found in the cytoplasm. It catalyses the reaction N(6)-dimethylallyladenosine(37) in tRNA + (sulfur carrier)-SH + AH2 + 2 S-adenosyl-L-methionine = 2-methylsulfanyl-N(6)-dimethylallyladenosine(37) in tRNA + (sulfur carrier)-H + 5'-deoxyadenosine + L-methionine + A + S-adenosyl-L-homocysteine + 2 H(+). Catalyzes the methylthiolation of N6-(dimethylallyl)adenosine (i(6)A), leading to the formation of 2-methylthio-N6-(dimethylallyl)adenosine (ms(2)i(6)A) at position 37 in tRNAs that read codons beginning with uridine. This chain is tRNA-2-methylthio-N(6)-dimethylallyladenosine synthase, found in Clostridium novyi (strain NT).